The following is a 356-amino-acid chain: Holliday junction branch migration complex subunit RuvB (356 aa).

The large ATPase domain (RuvB-L) stretch occupies residues 4–191; it reads TDKLATEQRI…FGIVARLEFY (188 aa). ATP-binding positions include Leu30, Arg31, Gly72, Lys75, Thr76, Thr77, 138–140, Arg181, Tyr191, and Arg228; that span reads EDY. Thr76 provides a ligand contact to Mg(2+). The segment at 192 to 262 is small ATPAse domain (RuvB-S); that stretch reads DAEQLSRIVR…VADAALAMLD (71 aa). The tract at residues 265–356 is head domain (RuvB-H); sequence PVGFDLMDRK…RGEWDTPDGK (92 aa). Residues Arg301, Arg320, and Arg325 each coordinate DNA.

The protein belongs to the RuvB family. Homohexamer. Forms an RuvA(8)-RuvB(12)-Holliday junction (HJ) complex. HJ DNA is sandwiched between 2 RuvA tetramers; dsDNA enters through RuvA and exits via RuvB. An RuvB hexamer assembles on each DNA strand where it exits the tetramer. Each RuvB hexamer is contacted by two RuvA subunits (via domain III) on 2 adjacent RuvB subunits; this complex drives branch migration. In the full resolvosome a probable DNA-RuvA(4)-RuvB(12)-RuvC(2) complex forms which resolves the HJ.

The protein resides in the cytoplasm. It catalyses the reaction ATP + H2O = ADP + phosphate + H(+). Functionally, the RuvA-RuvB-RuvC complex processes Holliday junction (HJ) DNA during genetic recombination and DNA repair, while the RuvA-RuvB complex plays an important role in the rescue of blocked DNA replication forks via replication fork reversal (RFR). RuvA specifically binds to HJ cruciform DNA, conferring on it an open structure. The RuvB hexamer acts as an ATP-dependent pump, pulling dsDNA into and through the RuvAB complex. RuvB forms 2 homohexamers on either side of HJ DNA bound by 1 or 2 RuvA tetramers; 4 subunits per hexamer contact DNA at a time. Coordinated motions by a converter formed by DNA-disengaged RuvB subunits stimulates ATP hydrolysis and nucleotide exchange. Immobilization of the converter enables RuvB to convert the ATP-contained energy into a lever motion, pulling 2 nucleotides of DNA out of the RuvA tetramer per ATP hydrolyzed, thus driving DNA branch migration. The RuvB motors rotate together with the DNA substrate, which together with the progressing nucleotide cycle form the mechanistic basis for DNA recombination by continuous HJ branch migration. Branch migration allows RuvC to scan DNA until it finds its consensus sequence, where it cleaves and resolves cruciform DNA. In Burkholderia lata (strain ATCC 17760 / DSM 23089 / LMG 22485 / NCIMB 9086 / R18194 / 383), this protein is Holliday junction branch migration complex subunit RuvB.